The following is an 83-amino-acid chain: Hainantoxin-III 4 (83 aa).

The N-terminal stretch at 1–21 (MKASMYLALAGLVLLFVVGYA) is a signal peptide. Residues 22-48 (SESEEKEFPRELLSKIFAVDDFKGKER) constitute a propeptide that is removed on maturation. 3 disulfides stabilise this stretch: cysteine 50–cysteine 65, cysteine 57–cysteine 70, and cysteine 64–cysteine 77. Leucine amide is present on leucine 81.

It belongs to the neurotoxin 10 (Hwtx-1) family. 15 (Hntx-3) subfamily. Monomer. In terms of tissue distribution, expressed by the venom gland.

Its subcellular location is the secreted. In terms of biological role, selective antagonist of neuronal tetrodotoxin (TTX)-sensitive voltage-gated sodium channels (IC(50)=1270 nM on Nav1.1/SCN1A, 270 nM on Nav1.2/SCN2A, 491 nM on Nav1.3/SCN3A and 232 nM on Nav1.7/SCN9A). This toxin suppress Nav1.7 current amplitude without significantly altering the activation, inactivation, and repriming kinetics. Short extreme depolarizations partially activate the toxin-bound channel, indicating voltage-dependent inhibition of this toxin. This toxin increases the deactivation of the Nav1.7 current after extreme depolarizations. The toxin-Nav1.7 complex is gradually dissociated upon prolonged strong depolarizations in a voltage-dependent manner, and the unbound toxin rebinds to Nav1.7 after a long repolarization. Moreover, analysis of chimeric channels showed that the DIIS3-S4 linker is critical for toxin binding to Nav1.7. These data are consistent with this toxin interacting with Nav1.7 site 4 and trapping the domain II voltage sensor in the closed state. This Cyriopagopus hainanus (Chinese bird spider) protein is Hainantoxin-III 4.